We begin with the raw amino-acid sequence, 474 residues long: 6-phospho-beta-galactosidase (474 aa).

Gln19, His116, Asn159, Glu160, and Asn297 together coordinate D-galactose 6-phosphate. Glu160 serves as the catalytic Proton donor. The active-site Nucleophile is Glu375. Positions 433, 434, 440, and 442 each coordinate D-galactose 6-phosphate.

This sequence belongs to the glycosyl hydrolase 1 family.

The catalysed reaction is a 6-phospho-beta-D-galactoside + H2O = D-galactose 6-phosphate + an alcohol. The protein operates within carbohydrate metabolism; lactose degradation; D-galactose 6-phosphate and beta-D-glucose from lactose 6-phosphate: step 1/1. In Lacticaseibacillus casei (Lactobacillus casei), this protein is 6-phospho-beta-galactosidase.